A 394-amino-acid polypeptide reads, in one-letter code: MGRLQMLKHKNEPLTPGYHGFPTRDSQGNQEPTTTPDAMVQPFTTIPFPPPPQNGIPTEYGVPHTQDYAGQTSEHNLTLYGSTQAHGEQSSNSPSTQNGSLTTEGGAQTDGQQSQTQSSENSESKSTPKRLHVSNIPFRFRDPDLRQMFGQFGKILDVEIIFNERGSKGFGFVTFENSADADRAREKLHGTVVEGRKIEVNNATARVMTNKKMVTPYANGWKLSPVVGAVYGPELYAASSFQADVSLGNDAAVPLSGRGGINTYIPLIIPGFPYPTAATTAAAFRGAHLRGRGRTVYGAVRAVPPAAIPAYPGVVYQDGFYGADLYGGYAAYRYAQPATATAATAAAAAAAAYSDGYGRVYTADPYHALAPAASYGVGAVASLYRGGYSRFAPY.

2 disordered regions span residues 1–70 (MGRL…DYAG) and 83–135 (TQAH…HVSN). Composition is skewed to polar residues over residues 24–36 (RDSQ…TTTP) and 83–103 (TQAH…SLTT). A compositionally biased stretch (low complexity) spans 105 to 125 (GGAQTDGQQSQTQSSENSESK). In terms of domain architecture, RRM spans 129-205 (KRLHVSNIPF…RKIEVNNATA (77 aa)). An Omega-N-methylarginine modification is found at Arg285. Asymmetric dimethylarginine is present on residues Arg301 and Arg333. Arg385 and Arg390 each carry asymmetric dimethylarginine; alternate. An omega-N-methylarginine; alternate mark is found at Arg385 and Arg390.

In terms of assembly, interacts with ER-alpha N-terminal activation domain. Interacts with RBPMS; the interaction allows cooperative assembly of stable cell-specific alternative splicing regulatory complexes.

It localises to the nucleus. The protein resides in the cytoplasm. RNA-binding protein that regulates alternative splicing events by binding to 5'-UGCAUGU-3' elements. Prevents binding of U2AF2 to the 3'-splice site. Regulates alternative splicing of tissue-specific exons and of differentially spliced exons during erythropoiesis. Seems to act as a coregulatory factor of ER-alpha. Together with RNA binding proteins RBPMS and MBNL1/2, activates vascular smooth muscle cells alternative splicing events. The polypeptide is RNA binding protein fox-1 homolog 2 (RBFOX2) (Bos taurus (Bovine)).